Consider the following 158-residue polypeptide: Cytochrome c-type biogenesis protein CcmE (158 aa).

Over Met-1–Arg-8 the chain is Cytoplasmic. A helical; Signal-anchor for type II membrane protein transmembrane segment spans residues Leu-9 to Ala-29. Residues Leu-30–Arg-158 lie on the Periplasmic side of the membrane. His-130 and Tyr-134 together coordinate heme.

This sequence belongs to the CcmE/CycJ family.

Its subcellular location is the cell inner membrane. Functionally, heme chaperone required for the biogenesis of c-type cytochromes. Transiently binds heme delivered by CcmC and transfers the heme to apo-cytochromes in a process facilitated by CcmF and CcmH. The polypeptide is Cytochrome c-type biogenesis protein CcmE (Tatumella citrea (Pantoea citrea)).